Consider the following 263-residue polypeptide: Probable ribosomal RNA small subunit methyltransferase A (263 aa).

Residues L12, G37, E58, D83, and N100 each contribute to the S-adenosyl-L-methionine site.

Belongs to the class I-like SAM-binding methyltransferase superfamily. rRNA adenine N(6)-methyltransferase family. RsmA subfamily.

It is found in the cytoplasm. Functionally, specifically dimethylates two adjacent adenosines in the loop of a conserved hairpin near the 3'-end of 16S rRNA in the 30S particle. May play a critical role in biogenesis of 30S subunits. The protein is Probable ribosomal RNA small subunit methyltransferase A of Methanococcus maripaludis (strain C7 / ATCC BAA-1331).